The primary structure comprises 296 residues: Endonuclease 5 (296 aa).

Residues 1-20 form the signal peptide; the sequence is MRLWIVSVLVLTHLVHGALC. 2 residues coordinate a divalent metal cation: Trp-21 and His-26. 21 to 26 provides a ligand contact to substrate; the sequence is WGKDGH. Cys-30 and Cys-62 are oxidised to a cystine. Asp-66 and His-81 together coordinate a divalent metal cation. Substrate is bound by residues 66–72, 81–84, and 91–96; these read DEIKKLS, HYVN, and NYEYCR. 3 cysteine pairs are disulfide-bonded: Cys-90/Cys-243, Cys-98/Cys-108, and Cys-223/Cys-230. Positions 115 and 133 each coordinate substrate. N-linked (GlcNAc...) asparagine glycosylation occurs at Asn-115. Asn-134 is a glycosylation site (N-linked (GlcNAc...) asparagine). 3 residues coordinate a divalent metal cation: His-144, Asp-148, and His-154. The segment at 144–193 is substrate binding; that stretch reads HYMGDVHQPLHTGFLGDLGGNTIIVNWYHNKSNLHHVWDNMIIDSALETY. An N-linked (GlcNAc...) asparagine glycan is attached at Asn-173. Residues His-178 and Asp-182 each coordinate a divalent metal cation. An N-linked (GlcNAc...) asparagine glycan is attached at Asn-195. Positions 281-296 are cleaved as a propeptide — removed in mature form; it reads ATLNRIFSAKPKLAGL.

This sequence belongs to the nuclease type I family. As to quaternary structure, monomer. It depends on Zn(2+) as a cofactor.

It carries out the reaction Endonucleolytic cleavage to 5'-phosphomononucleotide and 5'-phosphooligonucleotide end-products.. Hydrolyzes, with low efficiency, only single-stranded DNA and RNA without apparent specificity for bases. Endonuclease that recognizes and cleaves some mismatches with high efficiency, including heteroduplex double-stranded DNA; mostly efficient on T/G, A/G and G/G mismatches, less efficient for T/T and poorly efficient for C/C, A/A, T/C and A/C. The protein is Endonuclease 5 of Arabidopsis thaliana (Mouse-ear cress).